Here is a 917-residue protein sequence, read N- to C-terminus: Hexokinase-1 (917 aa).

An N-acetylmethionine modification is found at M1. The interval 1-10 is mitochondrial-binding peptide (MBP); the sequence is MIAAQLLAYY. 2 consecutive Hexokinase domains span residues 16-458 and 464-906; these read DDQV…MVTA and AEQH…LITA. ATP contacts are provided by residues R30 and 84–89; that span reads DLGGSS. Residues 73 to 207 are hexokinase small subdomain 1; it reads DGSEKGDFIA…DYDANIVAVV (135 aa). Residue 84 to 91 coordinates D-glucose 6-phosphate; that stretch reads DLGGSSFR. Residues S155, 172–173, and 208–209 each bind D-glucose; these read TK and ND. The hexokinase large subdomain 1 stretch occupies residues 208–447; sequence NDTVGTMMTC…SDVRFLLSES (240 aa). D-glucose 6-phosphate contacts are provided by D209 and T232. D-glucose is bound by residues N235, E260, and 291–294; that span reads QLFE. At S337 the chain carries Phosphoserine. N345 contributes to the ATP binding site. Residue 413 to 415 participates in D-glucose 6-phosphate binding; sequence DGS. Position 425 to 426 (425 to 426) interacts with ATP; that stretch reads RR. D-glucose 6-phosphate contacts are provided by residues S449 and 532–536; that span reads DLGGT. The interval 521 to 655 is hexokinase small subdomain 2; sequence DGTENGDFLA…EFDLDVVAVV (135 aa). 532 to 537 lines the ATP pocket; sequence DLGGTN. Residues 603-604, 620-621, and 656-657 each bind D-glucose; these read SF, TK, and ND. Residues 656-895 are hexokinase large subdomain 2; that stretch reads NDTVGTMMTC…CNVSFLLSED (240 aa). D657 and T680 together coordinate D-glucose 6-phosphate. Position 680 (T680) interacts with ATP. D-glucose contacts are provided by residues 682–683, E708, and E742; that span reads SN. Residues 747–748, 784–788, and 863–867 contribute to the ATP site; these read GM, TKFLS, and TLYKL. D-glucose 6-phosphate contacts are provided by residues 861-863 and S897; that span reads DGT.

It belongs to the hexokinase family. Monomer. Interacts with RABL2/RABL2A; binds preferentially to GTP-bound RABL2. Interacts with VDAC1. The HK1-VDAC1 complex interacts with ATF2. Interacts (via N-terminal spermatogenic cell-specific region) with PFKM (via C-terminus). Interacts with SMAD5.

Its subcellular location is the mitochondrion outer membrane. It is found in the cytoplasm. The protein localises to the cytosol. The catalysed reaction is a D-hexose + ATP = a D-hexose 6-phosphate + ADP + H(+). The enzyme catalyses D-fructose + ATP = D-fructose 6-phosphate + ADP + H(+). It carries out the reaction D-glucose + ATP = D-glucose 6-phosphate + ADP + H(+). It catalyses the reaction D-mannose + ATP = D-mannose 6-phosphate + ADP + H(+). The catalysed reaction is D-glucosamine + ATP = D-glucosamine 6-phosphate + ADP + H(+). The protein operates within carbohydrate metabolism; hexose metabolism. It participates in carbohydrate degradation; glycolysis; D-glyceraldehyde 3-phosphate and glycerone phosphate from D-glucose: step 1/4. Its activity is regulated as follows. Hexokinase is an allosteric enzyme inhibited by its product D-glucose 6-phosphate. Hexokinase activity is inhibited by N-acetyl-D-glucosamine. In terms of biological role, catalyzes the phosphorylation of various hexoses, such as D-glucose, D-glucosamine, D-fructose, D-mannose and 2-deoxy-D-glucose, to hexose 6-phosphate (D-glucose 6-phosphate, D-glucosamine 6-phosphate, D-fructose 6-phosphate, D-mannose 6-phosphate and 2-deoxy-D-glucose 6-phosphate, respectively). Does not phosphorylate N-acetyl-D-glucosamine. Mediates the initial step of glycolysis by catalyzing phosphorylation of D-glucose to D-glucose 6-phosphate. Involved in innate immunity and inflammation by acting as a pattern recognition receptor for bacterial peptidoglycan. When released in the cytosol, N-acetyl-D-glucosamine component of bacterial peptidoglycan inhibits the hexokinase activity of HK1 and causes its dissociation from mitochondrial outer membrane, thereby activating the NLRP3 inflammasome. This Pongo abelii (Sumatran orangutan) protein is Hexokinase-1.